A 149-amino-acid polypeptide reads, in one-letter code: Nucleoside diphosphate kinase 1 (149 aa).

Residues Lys-9, Phe-57, Arg-85, Thr-91, Arg-102, and Asn-112 each coordinate ATP. The active-site Pros-phosphohistidine intermediate is His-115.

This sequence belongs to the NDK family. Homohexamer. Can also form dodecamers. Requires Mg(2+) as cofactor.

The protein resides in the nucleus. It catalyses the reaction a 2'-deoxyribonucleoside 5'-diphosphate + ATP = a 2'-deoxyribonucleoside 5'-triphosphate + ADP. The enzyme catalyses a ribonucleoside 5'-diphosphate + ATP = a ribonucleoside 5'-triphosphate + ADP. Major role in the synthesis of nucleoside triphosphates other than ATP. The ATP gamma phosphate is transferred to the NDP beta phosphate via a ping-pong mechanism, using a phosphorylated active-site intermediate. Involved in transcription regulation. Has G-quadruplex (G4) DNA-binding activity, which is independent of its nucleotide-binding and kinase activity. Binds folded G4 with low nanomolar affinity and corresponding unfolded G-rich DNA more weakly. Stabilizes folded G4s regardless of whether they are prefolded or not. The polypeptide is Nucleoside diphosphate kinase 1 (Zea mays (Maize)).